The chain runs to 334 residues: Ketol-acid reductoisomerase (NADP(+)) (334 aa).

Positions 1 to 181 constitute a KARI N-terminal Rossmann domain; it reads MTTVYYDQDV…GATRAGVIET (181 aa). NADP(+)-binding positions include 25–28, Arg48, Ser52, and 82–85; these read YGSQ and DEIQ. His107 is an active-site residue. An NADP(+)-binding site is contributed by Gly133. The KARI C-terminal knotted domain occupies 182–327; the sequence is TFKEETETDL…RELREMMPFI (146 aa). Mg(2+) contacts are provided by Asp190, Glu194, Glu226, and Glu230. Ser251 lines the substrate pocket.

This sequence belongs to the ketol-acid reductoisomerase family. The cofactor is Mg(2+).

It carries out the reaction (2R)-2,3-dihydroxy-3-methylbutanoate + NADP(+) = (2S)-2-acetolactate + NADPH + H(+). The catalysed reaction is (2R,3R)-2,3-dihydroxy-3-methylpentanoate + NADP(+) = (S)-2-ethyl-2-hydroxy-3-oxobutanoate + NADPH + H(+). It participates in amino-acid biosynthesis; L-isoleucine biosynthesis; L-isoleucine from 2-oxobutanoate: step 2/4. Its pathway is amino-acid biosynthesis; L-valine biosynthesis; L-valine from pyruvate: step 2/4. Functionally, involved in the biosynthesis of branched-chain amino acids (BCAA). Catalyzes an alkyl-migration followed by a ketol-acid reduction of (S)-2-acetolactate (S2AL) to yield (R)-2,3-dihydroxy-isovalerate. In the isomerase reaction, S2AL is rearranged via a Mg-dependent methyl migration to produce 3-hydroxy-3-methyl-2-ketobutyrate (HMKB). In the reductase reaction, this 2-ketoacid undergoes a metal-dependent reduction by NADPH to yield (R)-2,3-dihydroxy-isovalerate. The protein is Ketol-acid reductoisomerase (NADP(+)) of Staphylococcus aureus (strain Mu3 / ATCC 700698).